We begin with the raw amino-acid sequence, 346 residues long: MSQPESLPFIADFPLKPHNTFGFDVRARLACRIETDAQLLAALRDPRAAGLRRLVLGGGSNVVLTGDFDGLVLLVALRGRKVVREDDEAWYVEAAAGENWHEFVSWTLAEGMPGLENLALIPGTVGAAPIQNIGAYGLEMCERFASLRAVELATGKLVELGAGACRFGYRDSFFKQEGRERFVIVSVTFRLPKVWAPRAGYTDIARQLAAVGLGDATPTPQAIFDAVVAVRRAKLPDPFVLGNAGSFFKNPVVESAQFDALAAKEPEIVSYRQADGRVKLAAGWLIDRCGWKGRTLGAAGVHERQALVLVNRGGASGTEVLALAKAIQQDVAQRFGVELEAEPVCL.

The 172-residue stretch at 23-194 (FDVRARLACR…VSVTFRLPKV (172 aa)) folds into the FAD-binding PCMH-type domain. Residue R170 is part of the active site. Residue S246 is the Proton donor of the active site. The active site involves E342.

It belongs to the MurB family. The cofactor is FAD.

It localises to the cytoplasm. It catalyses the reaction UDP-N-acetyl-alpha-D-muramate + NADP(+) = UDP-N-acetyl-3-O-(1-carboxyvinyl)-alpha-D-glucosamine + NADPH + H(+). It participates in cell wall biogenesis; peptidoglycan biosynthesis. Cell wall formation. The polypeptide is UDP-N-acetylenolpyruvoylglucosamine reductase (Paraburkholderia phymatum (strain DSM 17167 / CIP 108236 / LMG 21445 / STM815) (Burkholderia phymatum)).